We begin with the raw amino-acid sequence, 154 residues long: Myoglobin (154 aa).

Residues 2–148 (GLSEGEWQLV…FRKDIAAKYK (147 aa)) enclose the Globin domain. At serine 4 the chain carries Phosphoserine. Histidine 65 contributes to the nitrite binding site. O2 is bound at residue histidine 65. At threonine 68 the chain carries Phosphothreonine. Histidine 94 is a binding site for heme b.

Monomer.

It localises to the cytoplasm. It is found in the sarcoplasm. The catalysed reaction is Fe(III)-heme b-[protein] + nitric oxide + H2O = Fe(II)-heme b-[protein] + nitrite + 2 H(+). It catalyses the reaction H2O2 + AH2 = A + 2 H2O. Monomeric heme protein which primary function is to store oxygen and facilitate its diffusion within muscle tissues. Reversibly binds oxygen through a pentacoordinated heme iron and enables its timely and efficient release as needed during periods of heightened demand. Depending on the oxidative conditions of tissues and cells, and in addition to its ability to bind oxygen, it also has a nitrite reductase activity whereby it regulates the production of bioactive nitric oxide. Under stress conditions, like hypoxia and anoxia, it also protects cells against reactive oxygen species thanks to its pseudoperoxidase activity. This is Myoglobin (MB) from Delphinapterus leucas (Beluga whale).